A 706-amino-acid polypeptide reads, in one-letter code: Probable serine/threonine-protein kinase zyg-1 (706 aa).

One can recognise a Protein kinase domain in the interval 13–249; that stretch reads YSHLKEIGKG…LTQIVLSEFM (237 aa). Residues 19-27 and lysine 41 contribute to the ATP site; that span reads IGKGGFGVV. The Proton acceptor role is filled by aspartate 131. Composition is skewed to basic and acidic residues over residues 261-290 and 323-336; these read SREH…DGRA and FDSE…RDSG. Disordered regions lie at residues 261–351 and 566–632; these read SREH…NRSQ and SPSS…VAPS. Over residues 566 to 579 the composition is skewed to low complexity; it reads SPSSLMPSGSSQTS. 2 stretches are compositionally biased toward polar residues: residues 580–592 and 603–629; these read RFPF…NQPS and KPTS…SPSV.

Belongs to the protein kinase superfamily. Ser/Thr protein kinase family. In terms of assembly, interacts with sel-10. Post-translationally, probably ubiquitinated by the SCF(sel-10) and SCF(lin-23) E3 ubiquitin ligase complexes, leading to its proteasomal degradation.

The protein localises to the cytoplasm. It is found in the cytoskeleton. The protein resides in the microtubule organizing center. It localises to the centrosome. Its subcellular location is the centriole. It carries out the reaction L-seryl-[protein] + ATP = O-phospho-L-seryl-[protein] + ADP + H(+). It catalyses the reaction L-threonyl-[protein] + ATP = O-phospho-L-threonyl-[protein] + ADP + H(+). Protein kinase that plays a central role in centrosome duplication, control of centrosome size, spindle formation and nuclear envelope breakdown during cell divisions. Paternal copy is required to regulate synthesis of daughter centrioles prior to fertilization. Maternal copy regulates centrosome duplication during later cell cycles. Functions upstream of sas-5 and sas-6, and is required for their localization to the centrosome. Its role in nuclear envelope breakdown is mediated by the spindly-like protein spdl-1 and the RZZ complex, which in turn recruits the spindle checkpoint proteins mdf-1 and mdf-2, dynein and dynactin to unattached kinetochores. This is Probable serine/threonine-protein kinase zyg-1 from Caenorhabditis elegans.